Here is a 320-residue protein sequence, read N- to C-terminus: GTP 3',8-cyclase (320 aa).

The 221-residue stretch at 5 to 225 (QFGRKINYLR…IQLIKKDEKA (221 aa)) folds into the Radical SAM core domain. Arginine 14 lines the GTP pocket. Residues cysteine 21 and cysteine 25 each coordinate [4Fe-4S] cluster. Tyrosine 27 contacts S-adenosyl-L-methionine. Cysteine 28 contacts [4Fe-4S] cluster. Residue arginine 64 coordinates GTP. An S-adenosyl-L-methionine-binding site is contributed by glycine 68. Residue threonine 95 coordinates GTP. Residue serine 119 participates in S-adenosyl-L-methionine binding. Lysine 155 serves as a coordination point for GTP. Methionine 189 provides a ligand contact to S-adenosyl-L-methionine. Residues cysteine 248 and cysteine 251 each coordinate [4Fe-4S] cluster. 253-255 (RIR) contacts GTP. Position 265 (cysteine 265) interacts with [4Fe-4S] cluster.

Belongs to the radical SAM superfamily. MoaA family. Monomer and homodimer. It depends on [4Fe-4S] cluster as a cofactor.

The enzyme catalyses GTP + AH2 + S-adenosyl-L-methionine = (8S)-3',8-cyclo-7,8-dihydroguanosine 5'-triphosphate + 5'-deoxyadenosine + L-methionine + A + H(+). It participates in cofactor biosynthesis; molybdopterin biosynthesis. In terms of biological role, catalyzes the cyclization of GTP to (8S)-3',8-cyclo-7,8-dihydroguanosine 5'-triphosphate. This Campylobacter jejuni subsp. jejuni serotype O:6 (strain 81116 / NCTC 11828) protein is GTP 3',8-cyclase.